Reading from the N-terminus, the 441-residue chain is Transcriptional regulatory protein ZraR (441 aa).

Positions 7–121 (DILVVDDDIS…NLQATLEKAL (115 aa)) constitute a Response regulatory domain. 4-aspartylphosphate is present on D56. Residues 141 to 370 (MVGKSPAMQH…LENAVERAVV (230 aa)) form the Sigma-54 factor interaction domain. Residues G172, T173, R329, and R359 each contribute to the ATP site. The H-T-H motif DNA-binding region spans 421-440 (KTEAARQLGITRKTLLAKLS).

In terms of processing, phosphorylated by ZraS.

The protein resides in the cytoplasm. Its activity is regulated as follows. Activity of the ZraS/ZraR two-component system is repressed by the zinc-bound form of ZraP, which probably interacts with the periplasmic region of ZraS. Part of the Zra signaling pathway, an envelope stress response (ESR) system composed of the periplasmic accessory protein ZraP, the histidine kinase ZraS and the transcriptional regulator ZraR. The ZraPSR system contributes to antibiotic resistance and is important for membrane integrity in the presence of membrane-targeting biocides. ZraR is a member of the two-component regulatory system ZraS/ZraR. When activated by ZraS, acts in conjunction with sigma-54 to regulate the expression of zraP in the presence of high Zn(2+) or Pb(2+) concentrations. Also positively autoregulates the expression of the zraSR operon. This is Transcriptional regulatory protein ZraR (zraR) from Escherichia coli O157:H7.